Reading from the N-terminus, the 335-residue chain is Solute-binding protein Veis_3954 (335 aa).

The signal sequence occupies residues 1–34 (MPSTRPLPRPSSRSLRRLALGLGLAFGLGATAAA). (R)-pantoate-binding positions include glutamine 50, glutamate 82, 155-158 (NGFR), arginine 179, and asparagine 219.

It belongs to the bacterial solute-binding protein 7 family. As to quaternary structure, the complex is comprised of an extracytoplasmic solute-binding protein and a heteromeric permease formed by two transmembrane proteins.

Its subcellular location is the periplasm. In terms of biological role, solute-binding protein that binds (R)-pantoate and D-erythronate (in vitro). Probably part of a tripartite ATP-independent periplasmic (TRAP) transport system that mediates solute transport into the cytoplasm. The protein is Solute-binding protein Veis_3954 of Verminephrobacter eiseniae (strain EF01-2).